A 252-amino-acid polypeptide reads, in one-letter code: Outer membrane protein P1 (252 aa).

An N-terminal signal peptide occupies residues 1-23 (METTTKLAIGVSALCCLASAAFA).

This sequence belongs to the Coxiella porin P1 (CPP1) (TC 1.B.43) family. May form trimers.

Its subcellular location is the cell outer membrane. Its function is as follows. Able to form a pore in lipid bilayers. This chain is Outer membrane protein P1 (ompP1), found in Coxiella burnetii (strain RSA 493 / Nine Mile phase I).